Here is a 271-residue protein sequence, read N- to C-terminus: MVLVEFLTGFSYLYGKKLFSVSKIMDMICLDYYTIIPAPLAMMLAARVKNYDLMKRLHEWDISIDYALLVVDDVPTIDYCLSLGARSPTRAQKRQLLGDNTFSPVYKYLMNCSGFPTKREKNIPSDVQCERLQKIIIKELIFNCSVLLEMVLLTEREYAYALHYAAKYNQMPILMYCWQQSTDSESVLLKTCCSDKNINCFNHCILYGGAQNFDAAMVEAAKHDARLLINYCVMLGGRSLNEARETAAAFGHLECAQHCLRLQSYIVDDTD.

The protein belongs to the asfivirus MGF 360 family.

In terms of biological role, plays a role in virus cell tropism, and may be required for efficient virus replication in macrophages. This African swine fever virus (isolate Tick/Malawi/Lil 20-1/1983) (ASFV) protein is Protein MGF 360-15R.